A 228-amino-acid polypeptide reads, in one-letter code: Lipoprotein-releasing system ATP-binding protein LolD (228 aa).

One can recognise an ABC transporter domain in the interval L8–L228. G44–S51 lines the ATP pocket.

Belongs to the ABC transporter superfamily. Lipoprotein translocase (TC 3.A.1.125) family. In terms of assembly, the complex is composed of two ATP-binding proteins (LolD) and two transmembrane proteins (LolC and LolE).

The protein resides in the cell inner membrane. In terms of biological role, part of the ABC transporter complex LolCDE involved in the translocation of mature outer membrane-directed lipoproteins, from the inner membrane to the periplasmic chaperone, LolA. Responsible for the formation of the LolA-lipoprotein complex in an ATP-dependent manner. This chain is Lipoprotein-releasing system ATP-binding protein LolD, found in Alcanivorax borkumensis (strain ATCC 700651 / DSM 11573 / NCIMB 13689 / SK2).